The chain runs to 42 residues: Photosystem I reaction center subunit IX (42 aa).

Residues tyrosine 7–isoleucine 27 form a helical membrane-spanning segment.

It belongs to the PsaJ family.

It localises to the plastid. The protein resides in the chloroplast thylakoid membrane. In terms of biological role, may help in the organization of the PsaE and PsaF subunits. The chain is Photosystem I reaction center subunit IX from Daucus carota (Wild carrot).